The primary structure comprises 494 residues: Glutamyl-tRNA(Gln) amidotransferase subunit A (494 aa).

Catalysis depends on charge relay system residues lysine 79 and serine 154. Serine 178 (acyl-ester intermediate) is an active-site residue.

It belongs to the amidase family. GatA subfamily. In terms of assembly, heterotrimer of A, B and C subunits.

The catalysed reaction is L-glutamyl-tRNA(Gln) + L-glutamine + ATP + H2O = L-glutaminyl-tRNA(Gln) + L-glutamate + ADP + phosphate + H(+). Allows the formation of correctly charged Gln-tRNA(Gln) through the transamidation of misacylated Glu-tRNA(Gln) in organisms which lack glutaminyl-tRNA synthetase. The reaction takes place in the presence of glutamine and ATP through an activated gamma-phospho-Glu-tRNA(Gln). This Clostridium kluyveri (strain NBRC 12016) protein is Glutamyl-tRNA(Gln) amidotransferase subunit A.